We begin with the raw amino-acid sequence, 688 residues long: Polyribonucleotide nucleotidyltransferase (688 aa).

Residues Asp484 and Asp490 each coordinate Mg(2+). In terms of domain architecture, KH spans Pro550–Ile609. An S1 motif domain is found at Asp626–Ala688.

Belongs to the polyribonucleotide nucleotidyltransferase family. It depends on Mg(2+) as a cofactor.

Its subcellular location is the cytoplasm. The catalysed reaction is RNA(n+1) + phosphate = RNA(n) + a ribonucleoside 5'-diphosphate. In terms of biological role, involved in mRNA degradation. Catalyzes the phosphorolysis of single-stranded polyribonucleotides processively in the 3'- to 5'-direction. The sequence is that of Polyribonucleotide nucleotidyltransferase from Helicobacter pylori (strain ATCC 700392 / 26695) (Campylobacter pylori).